The primary structure comprises 57 residues: UPF0391 membrane protein Smed_4051 (57 aa).

A run of 2 helical transmembrane segments spans residues 4 to 24 (WALI…SGIS) and 33 to 53 (ILFY…LAVG).

It belongs to the UPF0391 family.

It is found in the cell membrane. The polypeptide is UPF0391 membrane protein Smed_4051 (Sinorhizobium medicae (strain WSM419) (Ensifer medicae)).